A 435-amino-acid polypeptide reads, in one-letter code: Adenylosuccinate synthetase (435 aa).

Residues 13-19 (GDEGKGK) and 41-43 (GHT) contribute to the GTP site. Catalysis depends on Asp14, which acts as the Proton acceptor. Positions 14 and 41 each coordinate Mg(2+). Residues 14-17 (DEGK), 39-42 (NAGH), Thr130, Arg144, Gln225, Thr240, and Arg304 contribute to the IMP site. His42 (proton donor) is an active-site residue. 300–306 (ATTGRPR) is a binding site for substrate. GTP is bound by residues Arg306, 332-334 (KLD), and 419-421 (STG).

It belongs to the adenylosuccinate synthetase family. As to quaternary structure, homodimer. Requires Mg(2+) as cofactor.

The protein localises to the cytoplasm. The enzyme catalyses IMP + L-aspartate + GTP = N(6)-(1,2-dicarboxyethyl)-AMP + GDP + phosphate + 2 H(+). It functions in the pathway purine metabolism; AMP biosynthesis via de novo pathway; AMP from IMP: step 1/2. Plays an important role in the de novo pathway of purine nucleotide biosynthesis. Catalyzes the first committed step in the biosynthesis of AMP from IMP. The protein is Adenylosuccinate synthetase of Nitrosospira multiformis (strain ATCC 25196 / NCIMB 11849 / C 71).